Consider the following 619-residue polypeptide: Probable ATP-dependent RNA helicase DDX59 (619 aa).

Lys26 is covalently cross-linked (Glycyl lysine isopeptide (Lys-Gly) (interchain with G-Cter in SUMO2)). Residues 57–98 (SESCPFPSPGGQLAEVHSVSPEQGAKDSHPSEEPVKSFSKTQ) form a disordered region. Phosphoserine occurs at positions 64 and 76. A compositionally biased stretch (basic and acidic residues) spans 80 to 91 (GAKDSHPSEEPV). An HIT-type zinc finger spans residues 104-133 (GEPICVVCGRYGEYICDKTDEDVCSLECKA). Residues 142–161 (KEEKSKLSNPQKADSEPESP) are disordered. Ser156 and Ser160 each carry phosphoserine. The Q motif motif lies at 203–231 (IDFEHCSLPEVLNHNLKKSGYEVPTPIQM). The Helicase ATP-binding domain occupies 234–405 (IPVGLLGRDI…SQLLHNPVRI (172 aa)). 247–254 (ADTGSGKT) provides a ligand contact to ATP. The DEAD box motif lies at 353 to 356 (DEAD). The 164-residue stretch at 416 to 579 (NVRQIILWVE…ILPPQLLNSP (164 aa)) folds into the Helicase C-terminal domain.

It belongs to the DEAD box helicase family. DDX59 subfamily. Interacts (via HIT-type zinc finger) with the RUVBL1/RUVBL2 complex in the presence of ADP. In terms of tissue distribution, expressed in fibroblasts (at protein level).

It is found in the cytoplasm. The protein localises to the nucleus. It carries out the reaction ATP + H2O = ADP + phosphate + H(+). This Homo sapiens (Human) protein is Probable ATP-dependent RNA helicase DDX59 (DDX59).